A 231-amino-acid chain; its full sequence is ATP-dependent dethiobiotin synthetase BioD (231 aa).

12 to 17 contacts ATP; it reads DVGKTV. Thr16 provides a ligand contact to Mg(2+). The active site involves Lys37. Thr41 provides a ligand contact to substrate. ATP-binding positions include Asp50, 109–112, 170–171, and 200–202; these read EGAG, GS, and PAG. Residues Asp50 and Glu109 each contribute to the Mg(2+) site.

The protein belongs to the dethiobiotin synthetase family. Homodimer. Requires Mg(2+) as cofactor.

The protein resides in the cytoplasm. It carries out the reaction (7R,8S)-7,8-diammoniononanoate + CO2 + ATP = (4R,5S)-dethiobiotin + ADP + phosphate + 3 H(+). The protein operates within cofactor biosynthesis; biotin biosynthesis; biotin from 7,8-diaminononanoate: step 1/2. In terms of biological role, catalyzes a mechanistically unusual reaction, the ATP-dependent insertion of CO2 between the N7 and N8 nitrogen atoms of 7,8-diaminopelargonic acid (DAPA, also called 7,8-diammoniononanoate) to form a ureido ring. This chain is ATP-dependent dethiobiotin synthetase BioD, found in Rhodococcus jostii (strain RHA1).